Here is a 209-residue protein sequence, read N- to C-terminus: Probable nicotinate-nucleotide adenylyltransferase (209 aa).

The protein belongs to the NadD family.

It carries out the reaction nicotinate beta-D-ribonucleotide + ATP + H(+) = deamido-NAD(+) + diphosphate. Its pathway is cofactor biosynthesis; NAD(+) biosynthesis; deamido-NAD(+) from nicotinate D-ribonucleotide: step 1/1. Catalyzes the reversible adenylation of nicotinate mononucleotide (NaMN) to nicotinic acid adenine dinucleotide (NaAD). This chain is Probable nicotinate-nucleotide adenylyltransferase, found in Hydrogenovibrio crunogenus (strain DSM 25203 / XCL-2) (Thiomicrospira crunogena).